The primary structure comprises 311 residues: Glycosyltransferase 6 domain-containing protein 1 (311 aa).

The Cytoplasmic segment spans residues 1-5; the sequence is MKAKG. Residues 6-26 traverse the membrane as a helical; Signal-anchor for type II membrane protein segment; that stretch reads RILLLTSCLFLLLLLLAKIHL. The Lumenal segment spans residues 27-311; the sequence is RNHQEEELPL…KVAHYPTDDL (285 aa). N-linked (GlcNAc...) asparagine glycosylation occurs at Asn77. Substrate-binding positions include 85-90, 176-178, and 198-201; these read FAVSSF, SVN, and HAWW. The Nucleophile role is filled by Glu266.

This sequence belongs to the glycosyltransferase 6 family. Requires Mn(2+) as cofactor.

The protein resides in the membrane. This is Glycosyltransferase 6 domain-containing protein 1 (Glt6d1) from Rattus norvegicus (Rat).